The sequence spans 448 residues: Immunoglobulin G-binding protein G (448 aa).

An N-terminal signal peptide occupies residues 1 to 33 (MEKEKKVKYFLRKSAFGLASVSAAFLVGSTVFA). 4 consecutive repeat copies span residues 104–140 (LAKA…IKDL), 179–215 (LAEA…VKEL), 228–282 (TYKL…TVTE), and 298–352 (TYKL…TVTE). The tract at residues 104–215 (LAKAKADALK…AKTVEGVKEL (112 aa)) is 2 X 37 AA repeats. Residues 228-352 (TYKLILNGKT…DATKTFTVTE (125 aa)) are 2 X 55 AA repeats. The tract at residues 358-422 (PGDAPTEPEK…TLPTTGEGSN (65 aa)) is disordered. Positions 384-412 (AKDDAKKDDTKKEDAKKPEAKKDDAKKAE) are enriched in basic and acidic residues. A 5 X 5 AA repeats of [DE]-D-A-K-K region spans residues 386-410 (DDAKKDDTKKEDAKKPEAKKDDAKK). Positions 414-418 (LPTTG) match the LPXTG sorting signal motif. At T417 the chain carries Pentaglycyl murein peptidoglycan amidated threonine. The propeptide at 418–448 (GEGSNPFFTAAALAVMAGAGALAVASKRKED) is removed by sortase.

It is found in the secreted. It localises to the cell wall. Functionally, binds to the constant Fc region of IgG with high affinity. The chain is Immunoglobulin G-binding protein G (spg) from Streptococcus sp. group G.